The following is a 112-amino-acid chain: MKLSCLLLTLTIIFVLTIVHAPNVEAKDLADPESEAVGFADAFGEADAVGEADPNAGLGSVFGRLARILGRVIPKVAKKLGPKVAKVLPKVMKEAIPMAVEMAKSQEEQQPQ.

The N-terminal stretch at 1 to 26 is a signal peptide; that stretch reads MKLSCLLLTLTIIFVLTIVHAPNVEA. Residues 27–56 constitute a propeptide that is removed on maturation; that stretch reads KDLADPESEAVGFADAFGEADAVGEADPNA. Residues 57 to 78 are critical for cytotoxic activity; that stretch reads GLGSVFGRLARILGRVIPKVAK. The segment at 93–106 is igE-binding determinant; that stretch reads KEAIPMAVEMAKSQ.

It belongs to the formicidae venom precursor-01 superfamily. Ant pilosulin family. In terms of tissue distribution, expressed by the venom gland.

Its subcellular location is the secreted. Its function is as follows. Has strong cytotoxic and hemolytic activities. Is more potent against mononuclear leukocytes than against granulocytes. The synthesized peptide 57-76 shows a potent and broad spectrum antimicrobial activity against both Gram-positive and Gram-negative bacteria, and also against the fungus C.albicans. Adopts an alpha-helical structure. This chain is M-myrmeciitoxin-Mp1, found in Myrmecia pilosula (Jack jumper ant).